The sequence spans 103 residues: MLNDLYEEIKLRKTQPREGSYTNYLFDKGLDKILKKVGEEATEVVIAAKNDNQELIAEVSDLAYHLLVLLAEKNIPLVAIQTELQKREGKLSTTRDRKEINDL.

The protein belongs to the PRA-PH family.

The protein resides in the cytoplasm. The catalysed reaction is 1-(5-phospho-beta-D-ribosyl)-ATP + H2O = 1-(5-phospho-beta-D-ribosyl)-5'-AMP + diphosphate + H(+). It participates in amino-acid biosynthesis; L-histidine biosynthesis; L-histidine from 5-phospho-alpha-D-ribose 1-diphosphate: step 2/9. The sequence is that of Phosphoribosyl-ATP pyrophosphatase (hisE) from Listeria monocytogenes serovar 1/2a (strain ATCC BAA-679 / EGD-e).